The sequence spans 553 residues: Phenylalanine--tRNA ligase alpha subunit (553 aa).

2 residues coordinate L-phenylalanine: Thr400 and Phe479. Residue Glu481 participates in Mg(2+) binding.

Belongs to the class-II aminoacyl-tRNA synthetase family. Phe-tRNA synthetase alpha subunit type 2 subfamily. As to quaternary structure, tetramer of two alpha and two beta subunits. Mg(2+) serves as cofactor.

The protein resides in the cytoplasm. The catalysed reaction is tRNA(Phe) + L-phenylalanine + ATP = L-phenylalanyl-tRNA(Phe) + AMP + diphosphate + H(+). In Treponema pallidum (strain Nichols), this protein is Phenylalanine--tRNA ligase alpha subunit.